A 145-amino-acid chain; its full sequence is Cuticle protein 7 (145 aa).

In terms of domain architecture, Chitin-binding type R&amp;R spans 41–114 (PVNVATSYHA…VASNALPVGP (74 aa)).

The polypeptide is Cuticle protein 7 (Blaberus craniifer (Death's head cockroach)).